A 437-amino-acid polypeptide reads, in one-letter code: Serine--tRNA ligase (437 aa).

Thr244–Glu246 is an L-serine binding site. Arg275–Glu277 lines the ATP pocket. Glu298 contributes to the L-serine binding site. Position 362–365 (Glu362–Ser365) interacts with ATP. L-serine is bound at residue Ser397.

Belongs to the class-II aminoacyl-tRNA synthetase family. Type-1 seryl-tRNA synthetase subfamily. As to quaternary structure, homodimer. The tRNA molecule binds across the dimer.

It is found in the cytoplasm. The catalysed reaction is tRNA(Ser) + L-serine + ATP = L-seryl-tRNA(Ser) + AMP + diphosphate + H(+). It catalyses the reaction tRNA(Sec) + L-serine + ATP = L-seryl-tRNA(Sec) + AMP + diphosphate + H(+). The protein operates within aminoacyl-tRNA biosynthesis; selenocysteinyl-tRNA(Sec) biosynthesis; L-seryl-tRNA(Sec) from L-serine and tRNA(Sec): step 1/1. Functionally, catalyzes the attachment of serine to tRNA(Ser). Is also able to aminoacylate tRNA(Sec) with serine, to form the misacylated tRNA L-seryl-tRNA(Sec), which will be further converted into selenocysteinyl-tRNA(Sec). The protein is Serine--tRNA ligase of Nitrosomonas eutropha (strain DSM 101675 / C91 / Nm57).